The chain runs to 166 residues: Small ribosomal subunit protein uS5 (166 aa).

The S5 DRBM domain maps to 11-74 (LEDRVVAINR…EDAKKNLVEV (64 aa)).

Belongs to the universal ribosomal protein uS5 family. Part of the 30S ribosomal subunit. Contacts proteins S4 and S8.

With S4 and S12 plays an important role in translational accuracy. Its function is as follows. Located at the back of the 30S subunit body where it stabilizes the conformation of the head with respect to the body. The protein is Small ribosomal subunit protein uS5 of Enterococcus faecalis (strain ATCC 700802 / V583).